Here is a 160-residue protein sequence, read N- to C-terminus: UPF0178 protein PLES_56411 (160 aa).

It belongs to the UPF0178 family.

In Pseudomonas aeruginosa (strain LESB58), this protein is UPF0178 protein PLES_56411.